A 415-amino-acid chain; its full sequence is Heterogeneous nuclear ribonucleoprotein F (415 aa).

M1 carries the N-acetylmethionine modification. M2 carries the post-translational modification N-acetylmethionine; in Heterogeneous nuclear ribonucleoprotein F, N-terminally processed. The RRM 1 domain maps to 11 to 90; it reads YVVKLRGLPW…RYIEVFKSHR (80 aa). Residue K72 forms a Glycyl lysine isopeptide (Lys-Gly) (interchain with G-Cter in SUMO) linkage. Residues 81-86 are interaction with RNA; sequence RYIEVF. Residue K87 forms a Glycyl lysine isopeptide (Lys-Gly) (interchain with G-Cter in SUMO2) linkage. Phosphoserine occurs at positions 104, 107, and 161. An RRM 2 domain is found at 111–188; the sequence is GFVRLRGLPF…RYIEVFKSSQ (78 aa). A Glycyl lysine isopeptide (Lys-Gly) (interchain with G-Cter in SUMO2) cross-link involves residue K167. The segment at 179 to 184 is interaction with RNA; the sequence is RYIEVF. K185 participates in a covalent cross-link: Glycyl lysine isopeptide (Lys-Gly) (interchain with G-Cter in SUMO2). Phosphoserine occurs at positions 187, 193, and 195. K200 is subject to N6-acetyllysine; alternate. K200 participates in a covalent cross-link: Glycyl lysine isopeptide (Lys-Gly) (interchain with G-Cter in SUMO2); alternate. T215 carries the phosphothreonine modification. N6-acetyllysine; alternate is present on K224. K224 participates in a covalent cross-link: Glycyl lysine isopeptide (Lys-Gly) (interchain with G-Cter in SUMO2); alternate. At S265 the chain carries Phosphoserine. The 78-residue stretch at 289 to 366 folds into the RRM 3 domain; sequence HCVHMRGLPY…IELFLNSTTG (78 aa). The segment at 355–360 is interaction with RNA; sequence RYIELF.

Identified in the spliceosome C complex. Interacts with AGO1, AGO2, TBP and TXNL4/DIM1. In terms of processing, sumoylated.

Its subcellular location is the nucleus. It localises to the nucleoplasm. In terms of biological role, component of the heterogeneous nuclear ribonucleoprotein (hnRNP) complexes which provide the substrate for the processing events that pre-mRNAs undergo before becoming functional, translatable mRNAs in the cytoplasm. Plays a role in the regulation of alternative splicing events. Binds G-rich sequences in pre-mRNAs and keeps target RNA in an unfolded state. This chain is Heterogeneous nuclear ribonucleoprotein F (Hnrnpf), found in Mus musculus (Mouse).